The primary structure comprises 435 residues: 5-methylthioadenosine/S-adenosylhomocysteine deaminase (435 aa).

2 residues coordinate Zn(2+): His-65 and His-67. Residues Glu-94, Arg-150, and His-189 each contribute to the substrate site. His-216 contacts Zn(2+). Glu-219 and Asp-304 together coordinate substrate. Zn(2+) is bound at residue Asp-304.

It belongs to the metallo-dependent hydrolases superfamily. MTA/SAH deaminase family. Requires Zn(2+) as cofactor.

The catalysed reaction is S-adenosyl-L-homocysteine + H2O + H(+) = S-inosyl-L-homocysteine + NH4(+). It carries out the reaction S-methyl-5'-thioadenosine + H2O + H(+) = S-methyl-5'-thioinosine + NH4(+). Catalyzes the deamination of 5-methylthioadenosine and S-adenosyl-L-homocysteine into 5-methylthioinosine and S-inosyl-L-homocysteine, respectively. Is also able to deaminate adenosine. The polypeptide is 5-methylthioadenosine/S-adenosylhomocysteine deaminase (Bacillus thuringiensis (strain Al Hakam)).